Reading from the N-terminus, the 197-residue chain is uncharacterized protein (197 aa).

4 helical membrane passes run 9 to 29 (IYIL…RFIL), 67 to 87 (LASL…ILML), 104 to 124 (IIAV…ISVI), and 160 to 180 (GLDL…MLVI).

This sequence belongs to the YggT family.

The protein resides in the cell membrane. This is an uncharacterized protein from Pseudomonas aeruginosa (strain ATCC 15692 / DSM 22644 / CIP 104116 / JCM 14847 / LMG 12228 / 1C / PRS 101 / PAO1).